Consider the following 468-residue polypeptide: Efflux pump azaK (468 aa).

The segment at 1 to 30 is disordered; it reads MTVHPPAVADETSPLLPSQDGPGHNGIVPA. Helical transmembrane passes span 43 to 65, 80 to 100, 112 to 132, 135 to 155, 174 to 194, and 207 to 227; these read QVALLCCARAIDPLAFFTIFPFV, VGFYSGIIESLFSVTQMMLMI, KPVLILSLAGLSVSSALFGFS, LGQMVFFRCLAGTFGGTVVTV, YFSLANTIGTVIGPLLGGALC, and LPTVAAGAFGVTVTVACLMFV. The N-linked (GlcNAc...) asparagine glycan is linked to Asn-228. Helical transmembrane passes span 257–277, 296–316, 329–349, 357–377, 387–407, and 429–449; these read VLPVLYIHGHSMMLAFAYTAV, FYISLFLGGSGIAQTIWLVLV, ILRGLCFVWIIFLAATVGASV, VAFWILAPLALVLGSSVAMQL, VSPSPAALGTLNAMSLAIISF, and PGFYTFWLVLGGLVLVLAFTL.

It belongs to the major facilitator superfamily.

The protein resides in the cell membrane. Efflux pump that might be required for efficient secretion of azaphilones. The protein is Efflux pump azaK of Aspergillus niger (strain ATCC 1015 / CBS 113.46 / FGSC A1144 / LSHB Ac4 / NCTC 3858a / NRRL 328 / USDA 3528.7).